A 174-amino-acid chain; its full sequence is Methylated-DNA--protein-cysteine methyltransferase (174 aa).

Cys141 functions as the Nucleophile; methyl group acceptor in the catalytic mechanism.

The protein belongs to the MGMT family.

Its subcellular location is the cytoplasm. It carries out the reaction a 6-O-methyl-2'-deoxyguanosine in DNA + L-cysteinyl-[protein] = S-methyl-L-cysteinyl-[protein] + a 2'-deoxyguanosine in DNA. It catalyses the reaction a 4-O-methyl-thymidine in DNA + L-cysteinyl-[protein] = a thymidine in DNA + S-methyl-L-cysteinyl-[protein]. Involved in the cellular defense against the biological effects of O6-methylguanine (O6-MeG) and O4-methylthymine (O4-MeT) in DNA. Repairs the methylated nucleobase in DNA by stoichiometrically transferring the methyl group to a cysteine residue in the enzyme. This is a suicide reaction: the enzyme is irreversibly inactivated. This is Methylated-DNA--protein-cysteine methyltransferase from Thermococcus kodakarensis (strain ATCC BAA-918 / JCM 12380 / KOD1) (Pyrococcus kodakaraensis (strain KOD1)).